A 432-amino-acid chain; its full sequence is Phosphomethylpyrimidine synthase (432 aa).

Residues Asn66, Met95, Tyr124, His163, 185-187 (SRG), 226-229 (DGMR), and Glu265 each bind substrate. A Zn(2+)-binding site is contributed by His269. Tyr292 serves as a coordination point for substrate. Zn(2+) is bound at residue His333. Positions 409, 412, and 416 each coordinate [4Fe-4S] cluster.

It belongs to the ThiC family. [4Fe-4S] cluster serves as cofactor.

It catalyses the reaction 5-amino-1-(5-phospho-beta-D-ribosyl)imidazole + S-adenosyl-L-methionine = 4-amino-2-methyl-5-(phosphooxymethyl)pyrimidine + CO + 5'-deoxyadenosine + formate + L-methionine + 3 H(+). It participates in cofactor biosynthesis; thiamine diphosphate biosynthesis. Functionally, catalyzes the synthesis of the hydroxymethylpyrimidine phosphate (HMP-P) moiety of thiamine from aminoimidazole ribotide (AIR) in a radical S-adenosyl-L-methionine (SAM)-dependent reaction. The protein is Phosphomethylpyrimidine synthase of Desulforudis audaxviator (strain MP104C).